We begin with the raw amino-acid sequence, 596 residues long: F-box/WD repeat-containing protein 8 (596 aa).

Residue methionine 1 is modified to N-acetylmethionine. Residues 21–95 form a disordered region; sequence QVLRRRRRLE…PDRDAAEPEP (75 aa). The span at 29-43 shows a compositional bias: basic and acidic residues; the sequence is LEAGERRPRRPEAGA. The segment covering 44–64 has biased composition (low complexity); the sequence is RGEPASGYLGLAQGLLEGAGR. Positions 71-91 are enriched in basic and acidic residues; that stretch reads GRTDRKDVSSRSRSPPDRDAA. Serine 82 and serine 84 each carry phosphoserine. The F-box domain occupies 111–157; that stretch reads PFFDVHLPYELAINIFQYLNRRELGLCAQVSKTWKVIAEDEVLWYRL. 8 WD repeats span residues 199–248, 257–297, 298–338, 339–381, 382–427, 428–473, 474–511, and 512–559; these read AVSE…LESE, QPYV…FEHD, ARIQ…SEFE, VQKL…LHYV, YGQP…SKLG, NALG…SAHQ, LGVS…EVHS, and RHPV…AYEF.

Component of the Cul7-RING(FBXW8) complex consisting of CUL7, RBX1, SKP1 and FBXW8; within the complex interacts with CUL7 and SKP1. Interacts with GLMN isoform 1. Interacts with OBSL1, CUL1, CUL2, CCT6B, PFDN5, CCT2, CCT3, CCT6A, CCT7, VBP1, CCDC8, ARF1, TRIP13, PDCD5 and GORASP1. Interacts with MAP4K1/HPK1 (when autophosphorylated). Associated component of the 3M complex. Interacts with POUF51 (when phosphorylated on 'Ser-347'). In terms of processing, phosphorylation at Ser-84 by mTORC2 promotes FBXW8 stabilization, allowing its translocation to the cytosol in response to insulin. In terms of tissue distribution, expressed in placenta and embryonic brain (at protein level).

It is found in the cytoplasm. It localises to the perinuclear region. Its subcellular location is the golgi apparatus. The protein resides in the cytosol. It participates in protein modification; protein ubiquitination. In terms of biological role, substrate-recognition component of the Cul7-RING(FBXW8) ubiquitin ligase complex, which mediates the ubiquitination and subsequent proteasomal degradation of target proteins. The Cul7-RING(FBXW8) complex mediates ubiquitination and consequent degradation of GORASP1, acting as a component of the ubiquitin ligase pathway that regulates Golgi morphogenesis and dendrite patterning in brain. Mediates ubiquitination and degradation of IRS1 in a mTOR-dependent manner: the Cul7-RING(FBXW8) complex recognizes and binds IRS1 previously phosphorylated by S6 kinase (RPS6KB1 or RPS6KB2). The Cul7-RING(FBXW8) complex also mediates ubiquitination of MAP4K1/HPK1: recognizes and binds autophosphorylated MAP4K1/HPK1, leading to its degradation, thereby affecting cell proliferation and differentiation. The Cul7-RING(FBXW8) complex also mediates ubiquitination of phosphorylated cyclin-D1 (CCND1). The Cul7-RING(FBXW8) complex is however not a major regulator of CCND1 stability during the G1/S transition. Associated component of the 3M complex, suggesting that it mediates some of 3M complex functions. The sequence is that of F-box/WD repeat-containing protein 8 (Fbxw8) from Rattus norvegicus (Rat).